We begin with the raw amino-acid sequence, 184 residues long: MISLHNLIWIDLEMTGLNPEQDRILEIATLITDANLNIIAEGPVLAIHQSEEQLKLMNTWNIRIHTANGLIEKVRKSTLNEETAAAQTIAFLQEWVPAGKSPICGNSISQDRRFLYRYMPILESYFHYRCLDVSTLQELARRWKPKIMAGIKKKNSHKALDDIRESVAELVYYRAHFLLLSSNI.

One can recognise an Exonuclease domain in the interval 7 to 170; it reads LIWIDLEMTG…DDIRESVAEL (164 aa). Tyr128 is an active-site residue.

This sequence belongs to the oligoribonuclease family.

It localises to the cytoplasm. 3'-to-5' exoribonuclease specific for small oligoribonucleotides. The chain is Oligoribonuclease from Baumannia cicadellinicola subsp. Homalodisca coagulata.